A 598-amino-acid polypeptide reads, in one-letter code: UvrABC system protein C (598 aa).

A GIY-YIG domain is found at 14 to 91 (DSPGCYLHKD…IQKNMPKYNI (78 aa)). The UVR domain maps to 196–231 (DKIIEDLRSKMLAASEEMAFERAAEYRDLISGIATM).

The protein belongs to the UvrC family. As to quaternary structure, interacts with UvrB in an incision complex.

It localises to the cytoplasm. The UvrABC repair system catalyzes the recognition and processing of DNA lesions. UvrC both incises the 5' and 3' sides of the lesion. The N-terminal half is responsible for the 3' incision and the C-terminal half is responsible for the 5' incision. The polypeptide is UvrABC system protein C (Streptococcus pyogenes serotype M28 (strain MGAS6180)).